Reading from the N-terminus, the 505-residue chain is Lysine--tRNA ligase (505 aa).

Glu415 and Glu422 together coordinate Mg(2+).

Belongs to the class-II aminoacyl-tRNA synthetase family. As to quaternary structure, homodimer. Mg(2+) serves as cofactor.

The protein localises to the cytoplasm. The enzyme catalyses tRNA(Lys) + L-lysine + ATP = L-lysyl-tRNA(Lys) + AMP + diphosphate. The polypeptide is Lysine--tRNA ligase (lysS) (Salmonella typhimurium (strain LT2 / SGSC1412 / ATCC 700720)).